The primary structure comprises 197 residues: Glycerol-3-phosphate acyltransferase (197 aa).

4 helical membrane-spanning segments follow: residues 1-21 (MNFL…FAIV), 78-98 (PVEA…SVFL), 112-132 (VLAG…LAVA), and 155-175 (VLLG…ILVW).

The protein belongs to the PlsY family. In terms of assembly, probably interacts with PlsX.

It is found in the cell inner membrane. It carries out the reaction an acyl phosphate + sn-glycerol 3-phosphate = a 1-acyl-sn-glycero-3-phosphate + phosphate. Its pathway is lipid metabolism; phospholipid metabolism. In terms of biological role, catalyzes the transfer of an acyl group from acyl-phosphate (acyl-PO(4)) to glycerol-3-phosphate (G3P) to form lysophosphatidic acid (LPA). This enzyme utilizes acyl-phosphate as fatty acyl donor, but not acyl-CoA or acyl-ACP. This is Glycerol-3-phosphate acyltransferase from Aromatoleum aromaticum (strain DSM 19018 / LMG 30748 / EbN1) (Azoarcus sp. (strain EbN1)).